The chain runs to 177 residues: MSRVANSPVQLPSGVELKQNGQDVTVKGGKGQLAIQIHDSVELKIEENVVTFAARDGAKASRAMAGTMRALVNNMVTGVSQGFEKKLVLNGVGYRAKAAGSTLNLTLGFSHPIDYDLPEGVTAETPTQTEILLKSANKQLLGQVASEVRAFRPPEPYKGKGVRYADEFVRRKEAKKK.

The protein belongs to the universal ribosomal protein uL6 family. As to quaternary structure, part of the 50S ribosomal subunit.

This protein binds to the 23S rRNA, and is important in its secondary structure. It is located near the subunit interface in the base of the L7/L12 stalk, and near the tRNA binding site of the peptidyltransferase center. This is Large ribosomal subunit protein uL6 from Teredinibacter turnerae (strain ATCC 39867 / T7901).